Here is a 124-residue protein sequence, read N- to C-terminus: Small ribosomal subunit protein uS12 (124 aa).

D89 carries the 3-methylthioaspartic acid modification. The disordered stretch occupies residues 105 to 124 (QGVKNRKQARSRYGAKKEKS). Basic residues predominate over residues 108 to 118 (KNRKQARSRYG).

This sequence belongs to the universal ribosomal protein uS12 family. As to quaternary structure, part of the 30S ribosomal subunit. Contacts proteins S8 and S17. May interact with IF1 in the 30S initiation complex.

Its function is as follows. With S4 and S5 plays an important role in translational accuracy. Functionally, interacts with and stabilizes bases of the 16S rRNA that are involved in tRNA selection in the A site and with the mRNA backbone. Located at the interface of the 30S and 50S subunits, it traverses the body of the 30S subunit contacting proteins on the other side and probably holding the rRNA structure together. The combined cluster of proteins S8, S12 and S17 appears to hold together the shoulder and platform of the 30S subunit. The sequence is that of Small ribosomal subunit protein uS12 from Mycobacteroides abscessus (strain ATCC 19977 / DSM 44196 / CCUG 20993 / CIP 104536 / JCM 13569 / NCTC 13031 / TMC 1543 / L948) (Mycobacterium abscessus).